Consider the following 276-residue polypeptide: Aliphatic sulfonates import ATP-binding protein SsuB 1 (276 aa).

Residues 1–21 (MSTGNVTTLRRPEAPPSLPAG) are disordered. One can recognise an ABC transporter domain in the interval 39 to 259 (FSFRNVTKSF…RHGTPEFARL (221 aa)). ATP is bound at residue 71–78 (GKSGCGKS).

The protein belongs to the ABC transporter superfamily. Aliphatic sulfonates importer (TC 3.A.1.17.2) family. As to quaternary structure, the complex is composed of two ATP-binding proteins (SsuB), two transmembrane proteins (SsuC) and a solute-binding protein (SsuA).

Its subcellular location is the cell inner membrane. The enzyme catalyses ATP + H2O + aliphatic sulfonate-[sulfonate-binding protein]Side 1 = ADP + phosphate + aliphatic sulfonateSide 2 + [sulfonate-binding protein]Side 1.. Its function is as follows. Part of the ABC transporter complex SsuABC involved in aliphatic sulfonates import. Responsible for energy coupling to the transport system. The chain is Aliphatic sulfonates import ATP-binding protein SsuB 1 from Agrobacterium fabrum (strain C58 / ATCC 33970) (Agrobacterium tumefaciens (strain C58)).